The following is a 247-amino-acid chain: Sec-independent protein translocase protein TatC (247 aa).

A run of 5 helical transmembrane segments spans residues Ile21–Ile41, Ala71–Val91, Ile109–Ile129, Phe154–Leu174, and Phe195–Ile215.

Belongs to the TatC family. As to quaternary structure, forms a complex with TatA.

The protein localises to the cell membrane. In terms of biological role, part of the twin-arginine translocation (Tat) system that transports large folded proteins containing a characteristic twin-arginine motif in their signal peptide across membranes. The protein is Sec-independent protein translocase protein TatC of Listeria innocua serovar 6a (strain ATCC BAA-680 / CLIP 11262).